Here is a 237-residue protein sequence, read N- to C-terminus: Lectin alpha chain (237 aa).

The Mn(2+) site is built by E8 and D10. Ca(2+) is bound by residues D10, Y12, N14, and D19. Y12 provides a ligand contact to a carbohydrate. 3 residues coordinate Mn(2+): D19, H24, and S34. 99-100 (LY) is a binding site for a carbohydrate. D208 lines the Ca(2+) pocket. A carbohydrate is bound at residue R228.

The protein belongs to the leguminous lectin family. Homotetramer. The beta and gamma chains are produced by partial proteolytic processing of the lectin alpha chain by an asparaginyl endopeptidase. Mixture of 60% alpha lectin and 40% of its beta and gamma proteolytic fragments.

Functionally, D-mannose/D-glucose-binding lectin. Has anti-inflammatory activity in rats. Induces histamine release in mast cells from rat. Induces lymphocyte proliferation and IFNG production. Shows toxicity against the aquatic snail B.glabrata at concentrations higher than 50 ug/ml. This is Lectin alpha chain from Dioclea grandiflora (Mucana).